A 558-amino-acid polypeptide reads, in one-letter code: NAD(P)H-quinone oxidoreductase chain 4 (558 aa).

The next 14 membrane-spanning stretches (helical) occupy residues 25 to 45 (FPWL…VPFI), 56 to 76 (WYAL…YLKG), 111 to 131 (LILL…PVSF), 133 to 153 (PKLF…VFAV), 157 to 177 (LLFF…LAIW), 189 to 209 (FIIY…AMGF), 230 to 250 (GFQL…LPVV), 264 to 284 (TAPV…YALL), 298 to 318 (FAPL…LTSF), 327 to 347 (IAYS…SFSS), 353 to 373 (AMLQ…LVGA), 395 to 417 (IMFA…SGFV), 438 to 458 (IVIA…LLSM), and 485 to 505 (IYVI…PRIM).

The protein belongs to the complex I subunit 4 family.

It localises to the cellular thylakoid membrane. It carries out the reaction a plastoquinone + NADH + (n+1) H(+)(in) = a plastoquinol + NAD(+) + n H(+)(out). The catalysed reaction is a plastoquinone + NADPH + (n+1) H(+)(in) = a plastoquinol + NADP(+) + n H(+)(out). Functionally, NDH-1 shuttles electrons from NAD(P)H, via FMN and iron-sulfur (Fe-S) centers, to quinones in the respiratory chain. The immediate electron acceptor for the enzyme in this species is believed to be plastoquinone. Couples the redox reaction to proton translocation (for every two electrons transferred, four hydrogen ions are translocated across the cytoplasmic membrane), and thus conserves the redox energy in a proton gradient. The protein is NAD(P)H-quinone oxidoreductase chain 4 of Prochlorococcus marinus (strain MIT 9211).